Here is a 794-residue protein sequence, read N- to C-terminus: Furin (794 aa).

The first 26 residues, Met-1 to Gly-26, serve as a signal peptide directing secretion. Positions Gln-27 to Arg-107 are cleaved as a propeptide — inhibition peptide. The Lumenal portion of the chain corresponds to Asp-108–Glu-715. Asp-115 is a Ca(2+) binding site. The region spanning Gln-121–Val-435 is the Peptidase S8 domain. Asp-153 functions as the Charge relay system in the catalytic mechanism. Asp-154 contacts substrate. Ca(2+) is bound by residues Asp-162, Asp-174, Asp-179, and Asp-181. The segment at Asp-162–Gln-183 is disordered. Asp-191–Asn-192 is a binding site for substrate. The active-site Charge relay system is His-194. Ca(2+)-binding residues include Val-205, Asn-208, Val-210, and Gly-212. 2 disulfides stabilise this stretch: Cys-211/Cys-360 and Cys-303/Cys-333. Substrate is bound by residues Glu-236, Ser-253–Asp-258, Asp-264, and Ala-292–Asn-295. Asp-258 contacts Ca(2+). Asp-301 lines the Ca(2+) pocket. Residues Asp-306 and Tyr-308 each coordinate substrate. Glu-331 is a binding site for Ca(2+). Ser-368 (charge relay system) is an active-site residue. Ser-368 contributes to the substrate binding site. 2 N-linked (GlcNAc...) asparagine glycosylation sites follow: Asn-387 and Asn-440. The P/Homo B domain occupies Val-444–Glu-576. Cys-450 and Cys-474 are disulfide-bonded. Residues Arg-498–Asp-500 carry the Cell attachment site motif. A glycan (N-linked (GlcNAc...) asparagine) is linked at Asn-553. FU repeat units lie at residues Gly-577–Pro-620 and Ala-638–Ser-681. Residues Gln-673–Pro-696 are disordered. The segment covering Ser-676–Pro-687 has biased composition (low complexity). A helical transmembrane segment spans residues Val-716–Leu-738. Residues Arg-739–Leu-794 are Cytoplasmic-facing. The cell surface signal stretch occupies residues Tyr-759 to Leu-762. Residues Trp-767–Gly-780 show a composition bias toward acidic residues. The tract at residues Trp-767–Leu-794 is disordered. Ser-773 and Ser-775 each carry phosphoserine; by CK2. Residues Ser-773–Glu-779 carry the Trans Golgi network signal motif.

The protein belongs to the peptidase S8 family. Furin subfamily. Interacts with FLNA. Binds to PACS1 which mediates TGN localization and connection to clathrin adapters. Interacts with LAMP1, LAMP2 and LAMP3. Ca(2+) is required as a cofactor. In terms of processing, the inhibition peptide, which plays the role of an intramolecular chaperone, is autocatalytically removed in the endoplasmic reticulum (ER) and remains non-covalently bound to furin as a potent autoinhibitor. Following transport to the trans Golgi, a second cleavage within the inhibition propeptide results in propeptide dissociation and furin activation. Phosphorylation is required for TGN localization of the endoprotease. In vivo, exists as di-, mono- and non-phosphorylated forms. As to expression, seems to be expressed ubiquitously.

Its subcellular location is the golgi apparatus. The protein resides in the trans-Golgi network membrane. It is found in the cell membrane. It localises to the secreted. The protein localises to the endosome membrane. It catalyses the reaction Release of mature proteins from their proproteins by cleavage of -Arg-Xaa-Yaa-Arg-|-Zaa- bonds, where Xaa can be any amino acid and Yaa is Arg or Lys. Releases albumin, complement component C3 and von Willebrand factor from their respective precursors.. Its activity is regulated as follows. Inhibited by the not secondly cleaved propeptide. Inhibited by m-guanidinomethyl-phenylacetyl-Arg-Val-Arg-(amidomethyl)-benzamidine (m-guanidinomethyl-Phac-RVR-Amb) and 4-guanidinomethyl-phenylacetyl-Arg-Tle-Arg-4-amidinobenzylamide (MI-1148). Inhibited by Decanoyl-Arg-Val-Lys-Arg-chloromethylketone (decanoyl-RVKR-CMK). Inhibited by heparin/heparan sulfate-binding. In terms of biological role, ubiquitous endoprotease within constitutive secretory pathways capable of cleavage at the RX(K/R)R consensus motif. Mediates processing of TGFB1, an essential step in TGF-beta-1 activation. Converts through proteolytic cleavage the non-functional Brain natriuretic factor prohormone into its active hormone BNP(1-32). By mediating processing of accessory subunit ATP6AP1/Ac45 of the V-ATPase, regulates the acidification of dense-core secretory granules in islets of Langerhans cells. (Microbial infection) Cleaves and activates diphtheria toxin DT. Functionally, (Microbial infection) Cleaves and activates anthrax toxin protective antigen (PA). Its function is as follows. (Microbial infection) Cleaves and activates HIV-1 virus Envelope glycoprotein gp160. In terms of biological role, (Microbial infection) Required for H7N1 and H5N1 influenza virus infection probably by cleaving hemagglutinin. (Microbial infection) Able to cleave S.pneumoniae serine-rich repeat protein PsrP. Functionally, (Microbial infection) Facilitates human coronaviruses EMC and SARS-CoV-2 infections by proteolytically cleaving the spike protein at the monobasic S1/S2 cleavage site. This cleavage is essential for spike protein-mediated cell-cell fusion and entry into human lung cells. Its function is as follows. (Microbial infection) Facilitates mumps virus infection by proteolytically cleaving the viral fusion protein F. In Homo sapiens (Human), this protein is Furin.